We begin with the raw amino-acid sequence, 144 residues long: Endoribonuclease YbeY (144 aa).

Zn(2+)-binding residues include His108, His112, and His118.

This sequence belongs to the endoribonuclease YbeY family. Zn(2+) serves as cofactor.

It localises to the cytoplasm. In terms of biological role, single strand-specific metallo-endoribonuclease involved in late-stage 70S ribosome quality control and in maturation of the 3' terminus of the 16S rRNA. The protein is Endoribonuclease YbeY of Phytoplasma australiense.